Reading from the N-terminus, the 234-residue chain is MGMAAESQFHVLAVDDSLFDRKLIERLLQKSSCQVTTVDSGSKALEFLGLRQSTDSNDPNAFSKAPVNHQVVEVNLIITDYCMPGMTGYDLLKKVKESSAFRDIPVVIMSSENVPARISRCLEEGAEEFFLKPVRLADLNKLKPHMMKTKLKNQKLEEIETTSKVENGVPTAVADPEIKDSTNIEIEILPLQQDLLLVQQEEQTLSINNKRKSVEEGISTDRARPRFDGIATAV.

Residues 10–147 (HVLAVDDSLF…DLNKLKPHMM (138 aa)) form the Response regulatory domain. At aspartate 80 the chain carries 4-aspartylphosphate.

This sequence belongs to the ARR family. Type-A subfamily. Interacts with AHP1 and AHP3. Two-component system major event consists of a His-to-Asp phosphorelay between a sensor histidine kinase (HK) and a response regulator (RR). In plants, the His-to-Asp phosphorelay involves an additional intermediate named Histidine-containing phosphotransfer protein (HPt). This multistep phosphorelay consists of a His-Asp-His-Asp sequential transfer of a phosphate group between first a His and an Asp of the HK protein, followed by the transfer to a conserved His of the HPt protein and finally the transfer to an Asp in the receiver domain of the RR protein. Predominantly expressed in roots.

The protein resides in the nucleus. In terms of biological role, functions as a response regulator involved in His-to-Asp phosphorelay signal transduction system. Phosphorylation of the Asp residue in the receiver domain activates the ability of the protein to promote the transcription of target genes. Type-A response regulators seem to act as negative regulators of the cytokinin signaling. The chain is Two-component response regulator ARR9 (ARR9) from Arabidopsis thaliana (Mouse-ear cress).